The primary structure comprises 453 residues: Ribulose bisphosphate carboxylase large chain (453 aa).

A propeptide spanning residues 1 to 2 is cleaved from the precursor; the sequence is MS. P3 carries the post-translational modification N-acetylproline. Position 14 is an N6,N6,N6-trimethyllysine (K14). The substrate site is built by N123 and T173. K175 (proton acceptor) is an active-site residue. Residue K177 coordinates substrate. The Mg(2+) site is built by K201, D203, and E204. An N6-carboxylysine modification is found at K201. H294 serves as the catalytic Proton acceptor. R295, H327, and S379 together coordinate substrate.

The protein belongs to the RuBisCO large chain family. Type I subfamily. As to quaternary structure, heterohexadecamer of 8 large chains and 8 small chains; disulfide-linked. The disulfide link is formed within the large subunit homodimers. Requires Mg(2+) as cofactor. The disulfide bond which can form in the large chain dimeric partners within the hexadecamer appears to be associated with oxidative stress and protein turnover.

It localises to the plastid. It is found in the chloroplast. The enzyme catalyses 2 (2R)-3-phosphoglycerate + 2 H(+) = D-ribulose 1,5-bisphosphate + CO2 + H2O. It catalyses the reaction D-ribulose 1,5-bisphosphate + O2 = 2-phosphoglycolate + (2R)-3-phosphoglycerate + 2 H(+). RuBisCO catalyzes two reactions: the carboxylation of D-ribulose 1,5-bisphosphate, the primary event in carbon dioxide fixation, as well as the oxidative fragmentation of the pentose substrate in the photorespiration process. Both reactions occur simultaneously and in competition at the same active site. This chain is Ribulose bisphosphate carboxylase large chain, found in Galium corsicum.